We begin with the raw amino-acid sequence, 382 residues long: Homeobox protein bagpipe (382 aa).

3 disordered regions span residues 27 to 66, 144 to 178, and 314 to 382; these read NDIL…SKSP, TSND…KKRS, and QPIP…VEID. Positions 48 to 62 are enriched in basic and acidic residues; sequence EPEKLKPSSDRERSI. The span at 158–170 shows a compositional bias: low complexity; that stretch reads SSPSESPLSHDGS. The homeobox DNA-binding region spans 175 to 234; sequence KKRSRAAFSHAQVFELERRFAQQRYLSGPERSEMAKSLRLTETQVKIWFQNRRYKTKRKQ. The segment covering 321–335 has biased composition (low complexity); the sequence is QSSSFVTASSASSSP. A compositionally biased stretch (acidic residues) spans 373–382; sequence EDVDENVEID.

The protein belongs to the NK-3 homeobox family. As to expression, is expressed in a segmented pattern in visceral muscle and in a subset of cardiac muscles. Loss of activity results in segmental gaps in midgut visceral muscle.

The protein localises to the nucleus. Functionally, involved in the determination of cell fates in the dorsal mesoderm. The chain is Homeobox protein bagpipe (bap) from Drosophila melanogaster (Fruit fly).